Consider the following 145-residue polypeptide: FAD synthase (145 aa).

Residues 5 to 6 (TF), 10 to 13 (HPGH), Asp-92, and Tyr-119 contribute to the ATP site.

Belongs to the archaeal FAD synthase family. Homodimer. Requires a divalent metal cation as cofactor.

The enzyme catalyses FMN + ATP + H(+) = FAD + diphosphate. Its pathway is cofactor biosynthesis; FAD biosynthesis; FAD from FMN: step 1/1. Functionally, catalyzes the transfer of the AMP portion of ATP to flavin mononucleotide (FMN) to produce flavin adenine dinucleotide (FAD) coenzyme. The polypeptide is FAD synthase (Methanothermus fervidus (strain ATCC 43054 / DSM 2088 / JCM 10308 / V24 S)).